Consider the following 393-residue polypeptide: S-adenosylmethionine synthase (393 aa).

Glu-10 contributes to the Mg(2+) binding site. His-16 serves as a coordination point for ATP. Glu-44 is a K(+) binding site. Residues Glu-57 and Gln-100 each contribute to the L-methionine site. ATP-binding positions include 168-170 (DGK), 236-239 (SGRF), Asp-247, 253-254 (RK), Ala-270, Lys-274, and Lys-278. Position 247 (Asp-247) interacts with L-methionine. Residue Lys-278 participates in L-methionine binding.

It belongs to the AdoMet synthase family. In terms of assembly, homotetramer. Requires Mn(2+) as cofactor. It depends on Mg(2+) as a cofactor. Co(2+) serves as cofactor. The cofactor is K(+).

Its subcellular location is the cytoplasm. It catalyses the reaction L-methionine + ATP + H2O = S-adenosyl-L-methionine + phosphate + diphosphate. The protein operates within amino-acid biosynthesis; S-adenosyl-L-methionine biosynthesis; S-adenosyl-L-methionine from L-methionine: step 1/1. Catalyzes the formation of S-adenosylmethionine from methionine and ATP. The reaction comprises two steps that are both catalyzed by the same enzyme: formation of S-adenosylmethionine (AdoMet) and triphosphate, and subsequent hydrolysis of the triphosphate. This Musa acuminata (Banana) protein is S-adenosylmethionine synthase (METK).